Consider the following 27-residue polypeptide: Cupiennin-3d (27 aa).

Glu27 bears the Glutamic acid 1-amide mark.

Expressed by the venom gland.

The protein resides in the secreted. In Cupiennius salei (American wandering spider), this protein is Cupiennin-3d.